Here is a 772-residue protein sequence, read N- to C-terminus: MLARPSTTVLARRPFFRFRGCLNEPRPTKARCLATAATHHQIPSTVDDKALVDLFDQPSLSKVRSHFHSTGLFGHPSLTHPRSLVSLAESTLVRAQLLTQRILDAKESEDELAHVVKNLDRLSDMLCGVIDLAELVRNAHPDRLWVEAGNHAYETLCEFMNVLNTHTGLNDTLKTVLSNPTLVKSLDPEAYQTALIFSRDFEKSGIDLPPATRNKFVSLSSDILILGRQFLENASTPRPPTSVKASELAGLKDKGMGVRLQLQAQFTNRDLQVYPGSLQAQMIMRAAPNEEPRRKLYLAANSSTPEQIHVLETLLKKRAELAQLVGRDSFAHMTLDDKMAKKPEHVTNFLDALIDHTRPFARNALRTLAQRKQAHHNLPALPVIQAWDRDFYCPPDPPAPPIPLPPLTIGTVFMGLSRLFRHLYGVSLRPAQAASGEVWHPDVQKLEVVDEQQGIIGWIYADLFPRRGKASGAAHYTVRCSRRTDDDDEANDGMFEGTELQIQESQQFEAVKRHRLPNQEGVYQLPLVVLLTEFARPSLSKGAAVLEWHEVQTLFHEMGHAMHSMLGRTEYQNVSGTRCATDFVELPSILMEHFLNSPAVLSLFDADNTTSLRQIGNHHNDPCHAIDTYSQIMLAVVDQVYHSPSVLNSSFDSTNEFANLVNKRGLIPYVPGTSFQTQFGHLFGYGATYYSYLFDRAIASRVWSKVFSRDPLNRELGEQYKQEVLRWGGARDPWEMVSTLLDQPELAAGDAEAMREVGRWRIEDEVGNSGRH.

Residues 1–33 (MLARPSTTVLARRPFFRFRGCLNEPRPTKARCL) constitute a mitochondrion transit peptide. His-556 serves as a coordination point for Zn(2+). Residue Glu-557 is part of the active site. Residues His-560 and His-563 each contribute to the Zn(2+) site.

It belongs to the peptidase M3 family. The cofactor is Zn(2+).

Its subcellular location is the mitochondrion matrix. It carries out the reaction Release of an N-terminal octapeptide as second stage of processing of some proteins imported into the mitochondrion.. In terms of biological role, cleaves proteins, imported into the mitochondrion, to their mature size. While most mitochondrial precursor proteins are processed to the mature form in one step by mitochondrial processing peptidase (MPP), the sequential cleavage by MIP of an octapeptide after initial processing by MPP is a required step for a subgroup of nuclear-encoded precursor proteins destined for the matrix or the inner membrane. This Coprinopsis scobicola (Ink cap fungus) protein is Mitochondrial intermediate peptidase (OCT1).